We begin with the raw amino-acid sequence, 465 residues long: Putative F-box protein At1g21990 (465 aa).

The F-box domain occupies 8–54; that stretch reads RDLISGSPDEILGKILSFLPTHHAATTSVLSKRWRNLLPLVDKLELT.

In Arabidopsis thaliana (Mouse-ear cress), this protein is Putative F-box protein At1g21990.